The chain runs to 223 residues: Putative archaetidylserine decarboxylase proenzyme (223 aa).

Residue Ser183 is the Schiff-base intermediate with substrate; via pyruvic acid of the active site. The residue at position 183 (Ser183) is a Pyruvic acid (Ser); by autocatalysis.

This sequence belongs to the phosphatidylserine decarboxylase family. PSD-A subfamily. In terms of assembly, heterodimer of a large membrane-associated beta subunit and a small pyruvoyl-containing alpha subunit. The cofactor is pyruvate. Is synthesized initially as an inactive proenzyme. Formation of the active enzyme involves a self-maturation process in which the active site pyruvoyl group is generated from an internal serine residue via an autocatalytic post-translational modification. Two non-identical subunits are generated from the proenzyme in this reaction, and the pyruvate is formed at the N-terminus of the alpha chain, which is derived from the carboxyl end of the proenzyme. The post-translation cleavage follows an unusual pathway, termed non-hydrolytic serinolysis, in which the side chain hydroxyl group of the serine supplies its oxygen atom to form the C-terminus of the beta chain, while the remainder of the serine residue undergoes an oxidative deamination to produce ammonia and the pyruvoyl prosthetic group on the alpha chain.

It is found in the cell membrane. The catalysed reaction is archaetidylserine + H(+) = archaetidylethanolamine + CO2. Catalyzes the formation of archaetidylethanolamine (PtdEtn) from archaetidylserine (PtdSer). This Methanothermobacter thermautotrophicus (strain ATCC 29096 / DSM 1053 / JCM 10044 / NBRC 100330 / Delta H) (Methanobacterium thermoautotrophicum) protein is Putative archaetidylserine decarboxylase proenzyme.